Consider the following 149-residue polypeptide: Arginine regulator (149 aa).

It belongs to the ArgR family.

The protein localises to the cytoplasm. The protein operates within amino-acid degradation; L-arginine degradation via ADI pathway. In terms of biological role, regulates the transcription of the arc operon, involved in arginine catabolism. The protein is Arginine regulator (argR1) of Bacillus cereus (strain ATCC 10987 / NRS 248).